The primary structure comprises 918 residues: Cap-specific mRNA (nucleoside-2'-O-)-methyltransferase 1 (918 aa).

Over residues 1-18 (MADRKSDEGEDEYQHKEQ) the composition is skewed to basic and acidic residues. Disordered stretches follow at residues 1 to 56 (MADR…EERA) and 62 to 81 (KRGY…EEEP). The segment covering 19 to 30 (MVTNRTSSFQPK) has biased composition (polar residues). Residues 43 to 56 (RAADRREEFMEERA) are compositionally biased toward basic and acidic residues. Acidic residues predominate over residues 68-80 (GDDEEDDFTAEEE). Residues 86–132 (PLTVAERLMAAMGHKAGEGLGKHGQGISEPIASSTQRGRTGLGHNAG) enclose the G-patch domain. Residues 236-465 (FFQNRAAMKT…ERYITCKGLR (230 aa)) enclose the RrmJ-type SAM-dependent 2'-O-MTase domain. 2 residues coordinate S-adenosyl-L-methionine: Gly-298 and Asp-379. The active-site Proton acceptor is the Lys-419.

The catalysed reaction is a 5'-end (N(7)-methyl 5'-triphosphoguanosine)-ribonucleoside in mRNA + S-adenosyl-L-methionine = a 5'-end (N(7)-methyl 5'-triphosphoguanosine)-(2'-O-methyl-ribonucleoside) in mRNA + S-adenosyl-L-homocysteine + H(+). S-adenosyl-L-methionine-dependent methyltransferase that mediates mRNA cap1 2'-O-ribose methylation to the 5'-cap structure of mRNAs. Methylates the ribose of the first nucleotide of a m(7)GpppG-capped mRNA to produce m(7)GpppNmp (cap1). Cap1 modification is linked to higher levels of translation. This is Cap-specific mRNA (nucleoside-2'-O-)-methyltransferase 1 from Caenorhabditis elegans.